The sequence spans 146 residues: Phosphoribosyl-AMP cyclohydrolase (146 aa).

Position 95 (D95) interacts with Mg(2+). C96 contacts Zn(2+). Residues D97 and D99 each contribute to the Mg(2+) site. Positions 112 and 119 each coordinate Zn(2+).

This sequence belongs to the PRA-CH family. Homodimer. Mg(2+) serves as cofactor. It depends on Zn(2+) as a cofactor.

It is found in the cytoplasm. It catalyses the reaction 1-(5-phospho-beta-D-ribosyl)-5'-AMP + H2O = 1-(5-phospho-beta-D-ribosyl)-5-[(5-phospho-beta-D-ribosylamino)methylideneamino]imidazole-4-carboxamide. It participates in amino-acid biosynthesis; L-histidine biosynthesis; L-histidine from 5-phospho-alpha-D-ribose 1-diphosphate: step 3/9. Its function is as follows. Catalyzes the hydrolysis of the adenine ring of phosphoribosyl-AMP. The protein is Phosphoribosyl-AMP cyclohydrolase of Chromohalobacter salexigens (strain ATCC BAA-138 / DSM 3043 / CIP 106854 / NCIMB 13768 / 1H11).